Consider the following 326-residue polypeptide: 2-dehydropantoate 2-reductase (326 aa).

NADP(+) contacts are provided by residues 7 to 12 and Asn103; that span reads GAGAIG. A substrate-binding site is contributed by Asn103. The active-site Proton donor is Lys205. Substrate-binding residues include Asn209, Asn213, and Ser274. Glu286 contributes to the NADP(+) binding site.

This sequence belongs to the ketopantoate reductase family.

The protein resides in the cytoplasm. It catalyses the reaction (R)-pantoate + NADP(+) = 2-dehydropantoate + NADPH + H(+). It participates in cofactor biosynthesis; (R)-pantothenate biosynthesis; (R)-pantoate from 3-methyl-2-oxobutanoate: step 2/2. Catalyzes the NADPH-dependent reduction of ketopantoate into pantoic acid. The chain is 2-dehydropantoate 2-reductase from Mesorhizobium japonicum (strain LMG 29417 / CECT 9101 / MAFF 303099) (Mesorhizobium loti (strain MAFF 303099)).